We begin with the raw amino-acid sequence, 433 residues long: MSFPKELERVLEITKAQNVWRRTQTLNLIASENVMSPLAESVYMSDFMSRYAEGKPYKRYYQGTKYTDEIETLAMDLMNEITNSKDCDLRPTSGTIANAAVFRVLAEPGDKALIAPVQAGAHVSHTKFGTLGALGIQHIEMPFDEENINVDVDKAIKMIEEVKPKFVVLGGSLYLFPHPTKELAPHVHAVGAKLVYDAAHVYGLIEGKVWSSPLKEGADIMTVSTHKTFPGPQGGAIFSDGSEVFKQVSRTIFPWFVSNHHLHRLPATAVTAIEMKYFGESYANQITRNSKALAEALAERGFKVIGENLGYTKSHQVAVDVRQFGGGNKIAKLLEDANIIVNKNLLPYDKPENVSDPSGLRIGVQEMTRYGMKESEMEEIAELFKKVIIDKKDINEVKKEVIDMRKNFLEVKYTFDDMKDLEKYSSKSLKLII.

121–123 (AHV) serves as a coordination point for (6S)-5,6,7,8-tetrahydrofolate. At K227 the chain carries N6-(pyridoxal phosphate)lysine. (6S)-5,6,7,8-tetrahydrofolate is bound at residue E243.

Belongs to the SHMT family. As to quaternary structure, homodimer. It depends on pyridoxal 5'-phosphate as a cofactor.

It localises to the cytoplasm. The protein operates within amino-acid biosynthesis; glycine biosynthesis; glycine from L-serine: step 1/1. Functionally, catalyzes the reversible interconversion of serine and glycine with a modified folate serving as the one-carbon carrier. Also exhibits a pteridine-independent aldolase activity toward beta-hydroxyamino acids, producing glycine and aldehydes, via a retro-aldol mechanism. This is Serine hydroxymethyltransferase from Saccharolobus islandicus (strain L.S.2.15 / Lassen #1) (Sulfolobus islandicus).